We begin with the raw amino-acid sequence, 126 residues long: Sperm-specific H1/protamine-like protein type 2 (126 aa).

The H15 domain occupies 5 to 84 (KKPTTLSMIV…GATGSFRVGK (80 aa)). The disordered stretch occupies residues 74–126 (SGATGSFRVGKAPASPKKAKKAKSPKKKSSKKSKNKSNNAKAKKSPKKKADSN). Residues 90 to 120 (KKAKKAKSPKKKSSKKSKNKSNNAKAKKSPK) show a composition bias toward basic residues.

In terms of processing, OE2 and OE3 are produced by post-translational cleavage of a common precursor. Sperm.

Its subcellular location is the nucleus. It is found in the chromosome. Linker histones are implicated in chromatin remodeling and/or transcriptional regulation during spermiogenesis, the process of spermatid maturation into spermatozoa. Protamines substitute for histones in the chromatin of sperm during the haploid phase of spermatogenesis. They compact sperm DNA into a highly condensed, stable and inactive complex. This Ostrea edulis (Native oyster) protein is Sperm-specific H1/protamine-like protein type 2.